Here is a 138-residue protein sequence, read N- to C-terminus: Acidic phospholipase A2 Cvv-E6f (138 aa).

A signal peptide spans 1–16 (MRTLWIVAVLLLGVEG). 7 cysteine pairs are disulfide-bonded: Cys-42–Cys-131, Cys-44–Cys-60, Cys-59–Cys-111, Cys-65–Cys-138, Cys-66–Cys-104, Cys-73–Cys-97, and Cys-91–Cys-102. The Ca(2+) site is built by Tyr-43, Gly-45, and Gly-47. The active site involves His-63. Asp-64 provides a ligand contact to Ca(2+). The active site involves Asp-105.

The cofactor is Ca(2+). Expressed by the venom gland.

The protein localises to the secreted. The catalysed reaction is a 1,2-diacyl-sn-glycero-3-phosphocholine + H2O = a 1-acyl-sn-glycero-3-phosphocholine + a fatty acid + H(+). Its function is as follows. Snake venom phospholipase A2 (PLA2) that shows very low inhibition of ADP-induced platelet aggregation in platelet-rich plasma of human, rabbit and guinea pig. In vivo, shows efficient edema-inducing activities in rat paws. PLA2 catalyzes the calcium-dependent hydrolysis of the 2-acyl groups in 3-sn-phosphoglycerides. The chain is Acidic phospholipase A2 Cvv-E6f from Crotalus viridis viridis (Prairie rattlesnake).